The following is a 425-amino-acid chain: Kynureninase (425 aa).

Pyridoxal 5'-phosphate-binding positions include L105, T106, 133–136 (FPSD), D218, H221, and Y243. Position 244 is an N6-(pyridoxal phosphate)lysine (K244). Pyridoxal 5'-phosphate-binding residues include W274 and N302.

Belongs to the kynureninase family. In terms of assembly, homodimer. Requires pyridoxal 5'-phosphate as cofactor.

It catalyses the reaction L-kynurenine + H2O = anthranilate + L-alanine + H(+). The enzyme catalyses 3-hydroxy-L-kynurenine + H2O = 3-hydroxyanthranilate + L-alanine + H(+). It participates in amino-acid degradation; L-kynurenine degradation; L-alanine and anthranilate from L-kynurenine: step 1/1. Its pathway is cofactor biosynthesis; NAD(+) biosynthesis; quinolinate from L-kynurenine: step 2/3. Its function is as follows. Catalyzes the cleavage of L-kynurenine (L-Kyn) and L-3-hydroxykynurenine (L-3OHKyn) into anthranilic acid (AA) and 3-hydroxyanthranilic acid (3-OHAA), respectively. This is Kynureninase from Flavobacterium johnsoniae (strain ATCC 17061 / DSM 2064 / JCM 8514 / BCRC 14874 / CCUG 350202 / NBRC 14942 / NCIMB 11054 / UW101) (Cytophaga johnsonae).